Consider the following 248-residue polypeptide: Probable transcriptional regulatory protein PFL_4766 (248 aa).

It belongs to the TACO1 family.

It is found in the cytoplasm. The sequence is that of Probable transcriptional regulatory protein PFL_4766 from Pseudomonas fluorescens (strain ATCC BAA-477 / NRRL B-23932 / Pf-5).